A 105-amino-acid chain; its full sequence is Heat shock protein HspQ (105 aa).

A disordered region spans residues 80 to 105 (AHPEQPSLDELAASIRHQLQAPHLRN).

Belongs to the HspQ family.

The protein localises to the cytoplasm. In terms of biological role, involved in the degradation of certain denaturated proteins, including DnaA, during heat shock stress. This Yersinia pseudotuberculosis serotype O:1b (strain IP 31758) protein is Heat shock protein HspQ.